The following is a 214-amino-acid chain: UPF0502 protein Acid345_3645 (214 aa).

This sequence belongs to the UPF0502 family.

This chain is UPF0502 protein Acid345_3645, found in Koribacter versatilis (strain Ellin345).